Reading from the N-terminus, the 526-residue chain is Probable metalloreductase AIM14 (526 aa).

7 consecutive transmembrane segments (helical) span residues 17–37, 60–80, 96–113, 138–158, 172–192, 199–219, and 221–241; these read IPYG…LGVL, LYLV…LLPF, RLGR…LLNL, CIII…ALGE, LAGV…IGPM, AFYV…AFHA, and PSVT…QGFA. The Ferric oxidoreductase domain occupies 97–214; that stretch reads LGRLSYALLP…NLTGISFIFV (118 aa). Residues 238–370 enclose the FAD-binding FR-type domain; it reads QGFAKFYYAK…GGSGISFGLP (133 aa).

Belongs to the ferric reductase (FRE) family. AIM14 subfamily.

It localises to the membrane. Functionally, probable cell surface metalloreductase. May be involved in iron or copper homeostasis. The protein is Probable metalloreductase AIM14 (AIM14) of Zygosaccharomyces rouxii (strain ATCC 2623 / CBS 732 / NBRC 1130 / NCYC 568 / NRRL Y-229).